The sequence spans 180 residues: Nucleoside-triphosphatase THEP1 (180 aa).

Residues 8–15 and 100–107 each bind ATP; these read GPVGSIKA and VIIIDELG.

This sequence belongs to the THEP1 NTPase family.

It catalyses the reaction a ribonucleoside 5'-triphosphate + H2O = a ribonucleoside 5'-diphosphate + phosphate + H(+). Its function is as follows. Has nucleotide phosphatase activity towards ATP, GTP, CTP, TTP and UTP. May hydrolyze nucleoside diphosphates with lower efficiency. The polypeptide is Nucleoside-triphosphatase THEP1 (Picrophilus torridus (strain ATCC 700027 / DSM 9790 / JCM 10055 / NBRC 100828 / KAW 2/3)).